The following is a 363-amino-acid chain: 3-dehydroquinate synthase (363 aa).

NAD(+)-binding positions include 134-135 (TT), K147, K156, and 174-177 (TLKT). Zn(2+)-binding residues include E189, H254, and H271.

This sequence belongs to the sugar phosphate cyclases superfamily. Dehydroquinate synthase family. The cofactor is Co(2+). It depends on Zn(2+) as a cofactor. NAD(+) is required as a cofactor.

Its subcellular location is the cytoplasm. The enzyme catalyses 7-phospho-2-dehydro-3-deoxy-D-arabino-heptonate = 3-dehydroquinate + phosphate. It participates in metabolic intermediate biosynthesis; chorismate biosynthesis; chorismate from D-erythrose 4-phosphate and phosphoenolpyruvate: step 2/7. In terms of biological role, catalyzes the conversion of 3-deoxy-D-arabino-heptulosonate 7-phosphate (DAHP) to dehydroquinate (DHQ). This is 3-dehydroquinate synthase from Prochlorococcus marinus (strain MIT 9515).